The following is a 239-amino-acid chain: Uridylate kinase (239 aa).

Lysine 13 to glycine 16 contacts ATP. Residue glycine 55 participates in UMP binding. ATP is bound by residues glycine 56 and arginine 60. UMP is bound by residues aspartate 75 and threonine 136–threonine 143. Residues threonine 163, glutamine 164, tyrosine 169, and aspartate 172 each contribute to the ATP site.

This sequence belongs to the UMP kinase family. As to quaternary structure, homohexamer.

The protein localises to the cytoplasm. The enzyme catalyses UMP + ATP = UDP + ADP. Its pathway is pyrimidine metabolism; CTP biosynthesis via de novo pathway; UDP from UMP (UMPK route): step 1/1. With respect to regulation, inhibited by UTP. Its function is as follows. Catalyzes the reversible phosphorylation of UMP to UDP. The chain is Uridylate kinase from Bartonella quintana (strain Toulouse) (Rochalimaea quintana).